A 465-amino-acid chain; its full sequence is Putative multidrug resistance protein MdtD (465 aa).

12 helical membrane passes run 12–32, 49–69, 72–92, 138–158, 165–185, 195–215, 219–239, 267–287, 290–310, 329–351, 393–413, and 430–450; these read LWIV…VNTA, SVIV…GWLA, IGVK…SLMC, FVTL…GFLV, WIFL…LLLM, FDIS…LALD, GLGL…IALG, LVGS…TPIF, IGLG…IIGS, VLVN…AIMG, LLSM…GILL, and SAFL…ALIF.

Belongs to the major facilitator superfamily. TCR/Tet family.

Its subcellular location is the cell inner membrane. This is Putative multidrug resistance protein MdtD from Yersinia pseudotuberculosis serotype I (strain IP32953).